The chain runs to 233 residues: Ion-translocating oxidoreductase complex subunit E (233 aa).

The next 6 helical transmembrane spans lie at 18-38, 39-59, 69-89, 92-112, 128-148, and 182-202; these read ALVQ…ATNA, LGLG…VSAL, IPIY…LINA, FGLY…CIVI, ALDG…LGAL, and PFLL…LLAG.

Belongs to the NqrDE/RnfAE family. The complex is composed of six subunits: RnfA, RnfB, RnfC, RnfD, RnfE and RnfG.

It is found in the cell inner membrane. Functionally, part of a membrane-bound complex that couples electron transfer with translocation of ions across the membrane. This is Ion-translocating oxidoreductase complex subunit E from Yersinia pestis bv. Antiqua (strain Angola).